Reading from the N-terminus, the 649-residue chain is Replication factor C small subunit (649 aa).

Residue 55–385 (GPAGVGKCVT…GCIPTVMHNT (331 aa)) coordinates ATP.

Belongs to the activator 1 small subunits family. RfcS subfamily. In terms of assembly, heteromultimer composed of small subunits (RfcS) and large subunits (RfcL). Post-translationally, this protein undergoes a protein self splicing that involves a post-translational excision of the intervening region (intein) followed by peptide ligation.

Functionally, part of the RFC clamp loader complex which loads the PCNA sliding clamp onto DNA. The chain is Replication factor C small subunit (rfcS) from Haloquadratum walsbyi (strain DSM 16790 / HBSQ001).